The chain runs to 316 residues: 4-hydroxy-3-methylbut-2-enyl diphosphate reductase (316 aa).

C12 is a [4Fe-4S] cluster binding site. Residues H43 and H81 each contribute to the (2E)-4-hydroxy-3-methylbut-2-enyl diphosphate site. Dimethylallyl diphosphate contacts are provided by H43 and H81. H43 and H81 together coordinate isopentenyl diphosphate. Residue C103 participates in [4Fe-4S] cluster binding. H131 serves as a coordination point for (2E)-4-hydroxy-3-methylbut-2-enyl diphosphate. H131 serves as a coordination point for dimethylallyl diphosphate. H131 serves as a coordination point for isopentenyl diphosphate. The active-site Proton donor is E133. T170 serves as a coordination point for (2E)-4-hydroxy-3-methylbut-2-enyl diphosphate. Position 198 (C198) interacts with [4Fe-4S] cluster. Positions 226, 228, and 271 each coordinate (2E)-4-hydroxy-3-methylbut-2-enyl diphosphate. Residues S226, N228, and S271 each coordinate dimethylallyl diphosphate. Isopentenyl diphosphate-binding residues include S226, N228, and S271.

The protein belongs to the IspH family. [4Fe-4S] cluster is required as a cofactor.

It carries out the reaction isopentenyl diphosphate + 2 oxidized [2Fe-2S]-[ferredoxin] + H2O = (2E)-4-hydroxy-3-methylbut-2-enyl diphosphate + 2 reduced [2Fe-2S]-[ferredoxin] + 2 H(+). It catalyses the reaction dimethylallyl diphosphate + 2 oxidized [2Fe-2S]-[ferredoxin] + H2O = (2E)-4-hydroxy-3-methylbut-2-enyl diphosphate + 2 reduced [2Fe-2S]-[ferredoxin] + 2 H(+). The protein operates within isoprenoid biosynthesis; dimethylallyl diphosphate biosynthesis; dimethylallyl diphosphate from (2E)-4-hydroxy-3-methylbutenyl diphosphate: step 1/1. Its pathway is isoprenoid biosynthesis; isopentenyl diphosphate biosynthesis via DXP pathway; isopentenyl diphosphate from 1-deoxy-D-xylulose 5-phosphate: step 6/6. In terms of biological role, catalyzes the conversion of 1-hydroxy-2-methyl-2-(E)-butenyl 4-diphosphate (HMBPP) into a mixture of isopentenyl diphosphate (IPP) and dimethylallyl diphosphate (DMAPP). Acts in the terminal step of the DOXP/MEP pathway for isoprenoid precursor biosynthesis. This Bacillus cereus (strain AH820) protein is 4-hydroxy-3-methylbut-2-enyl diphosphate reductase.